The sequence spans 649 residues: MVSAQVATELGQPIPLDTQHAVSVCFPTWKSVISYVEKDPKVLGCLKSGYPRFWIHPSIQKLRDILIEKYAKENETCFCFPSYRVAKRCREYVRRKCAHRNGKVRILQLATAKPINEEQKTWKRECKIAVVFVDGAYENILKQYWQYTGEIISSRLAEYVLHELFMVEKKSSPAEEKEYIEMRYGRNLNFAFADRAKELIKKRIATKVIDKDEHDEEENYHFLAGNQDEQDFQDTFLDSSLNEANHGEDHDGGISGEVDSQEEPHNGLVSTIPPEPIEMSTIEEEQSVEEDAGRCALRVCPERDVFLFPSGMASIFTAHRLLLQWDSLRLNRSRNGSDVTSSPPNKKTVIFGFPYADTLHVLQEFNETYFLGEGDESSMKELTKILHSGEQILAVFIETPSNPLLKMGNLLELKRLSELFGFFIIIDETVGGIVNIDGLPFADIVCSSLTKTFSGDSNVIGGSMVLNPQSRVYEFASRFMQLEDEYEDLLWCEDAIYLERNSRDFIARTIRINYSTEYLLDKILKPHVGENKLFKKIYYPNLTSKETLTNYDMVRCKKEGGYGGLFSLTFHDEDHAAAFYDNLKLNKGPSLGTNFTLAFPYTLMTYYHELDMAEKFGVERNLLRISVGLESQSILGKIFQEAIDKTVEI.

Residues 242–273 are disordered; sequence NEANHGEDHDGGISGEVDSQEEPHNGLVSTIP. S287 bears the Phosphoserine mark. Residue K451 is modified to N6-(pyridoxal phosphate)lysine.

Belongs to the trans-sulfuration enzymes family. MET7 subfamily. The cofactor is pyridoxal 5'-phosphate.

It catalyses the reaction O-succinyl-L-homoserine + L-cysteine = L,L-cystathionine + succinate + H(+). The protein operates within amino-acid biosynthesis; L-methionine biosynthesis via de novo pathway; L-cystathionine from O-succinyl-L-homoserine: step 1/1. Functionally, catalyzes the formation of L-cystathionine from O-succinyl-L-homoserine (OSHS) and L-cysteine, via a gamma-replacement reaction. In the absence of thiol, catalyzes gamma-elimination to form 2-oxobutanoate, succinate and ammonia. The sequence is that of Putative cystathionine gamma-synthase YML082W from Saccharomyces cerevisiae (strain ATCC 204508 / S288c) (Baker's yeast).